Reading from the N-terminus, the 122-residue chain is RxLR effector protein Avh52 (122 aa).

A signal peptide spans M1–A21. Residues R50–R68 carry the RxLR-dEER motif. Positions S69 to V86 are TAP1-binding. Residues K87 to K98 are nuclear localization signal (NLS).

The protein belongs to the RxLR effector family. As to quaternary structure, interacts with host acetyl transferase TAP1.

It localises to the secreted. The protein resides in the host nucleus. Functionally, effector that suppresses plant defense responses during the early stages of pathogen infection. Suppresses cell death induced by effectors and PAMPs in plant hosts. Interacts with host acetyltransferase TAP1 and causes TAP1 relocation into the nucleus where it acetylates histones H2A and H3 during early infection, thereby promoting susceptibility of host plant to P.sojae. This is RxLR effector protein Avh52 from Phytophthora sojae (Soybean stem and root rot agent).